The following is a 396-amino-acid chain: Flavohemoprotein (396 aa).

The Globin domain maps to 1-136; that stretch reads MLDAQTIATV…LANVFIHREA (136 aa). Heme b is bound at residue histidine 85. Residues tyrosine 95 and glutamate 135 each act as charge relay system in the active site. The reductase stretch occupies residues 147–396; sequence GGWEGTRPFR…YECFGPHKVL (250 aa). The FAD-binding FR-type domain maps to 150-255; that stretch reads EGTRPFRIVA…AAPAGDFFMN (106 aa). FAD is bound by residues tyrosine 188 and 204-207; that span reads RQYS. 268 to 273 contacts NADP(+); sequence GVGQTP. Residue 389 to 392 coordinates FAD; it reads CFGP.

The protein belongs to the globin family. Two-domain flavohemoproteins subfamily. It in the C-terminal section; belongs to the flavoprotein pyridine nucleotide cytochrome reductase family. As to quaternary structure, monomer. The cofactor is heme b. FAD serves as cofactor.

It catalyses the reaction 2 nitric oxide + NADPH + 2 O2 = 2 nitrate + NADP(+) + H(+). It carries out the reaction 2 nitric oxide + NADH + 2 O2 = 2 nitrate + NAD(+) + H(+). In terms of biological role, is involved in NO detoxification in an aerobic process, termed nitric oxide dioxygenase (NOD) reaction that utilizes O(2) and NAD(P)H to convert NO to nitrate, which protects the bacterium from various noxious nitrogen compounds. Therefore, plays a central role in the inducible response to nitrosative stress. This chain is Flavohemoprotein (hmp), found in Salmonella typhimurium (strain LT2 / SGSC1412 / ATCC 700720).